Consider the following 464-residue polypeptide: NADH-ubiquinone oxidoreductase chain 4 (464 aa).

13 helical membrane passes run 18–38 (LLPT…VLPT), 54–74 (IADI…IANW), 79–99 (SLLY…NFMC), 102–122 (MLSF…LIGL), 131–151 (AADY…LAIG), 168–188 (VVLS…GIMV), 207–227 (PLAG…YAII), 239–259 (VLYT…TSII), 266–286 (LKVI…LGIL), 297–317 (LILS…VGGI), 332–352 (GLLT…FSNI), 375–395 (TILG…MLKV), and 420–440 (LLMI…NGII).

Belongs to the complex I subunit 4 family.

The protein localises to the mitochondrion membrane. The catalysed reaction is a ubiquinone + NADH + 5 H(+)(in) = a ubiquinol + NAD(+) + 4 H(+)(out). Its function is as follows. Core subunit of the mitochondrial membrane respiratory chain NADH dehydrogenase (Complex I) that is believed to belong to the minimal assembly required for catalysis. Complex I functions in the transfer of electrons from NADH to the respiratory chain. The immediate electron acceptor for the enzyme is believed to be ubiquinone. This chain is NADH-ubiquinone oxidoreductase chain 4 (NAD4), found in Candida albicans (strain SC5314 / ATCC MYA-2876) (Yeast).